The primary structure comprises 235 residues: Probable transcriptional regulatory protein CFF8240_0424 (235 aa).

This sequence belongs to the TACO1 family.

It localises to the cytoplasm. The protein is Probable transcriptional regulatory protein CFF8240_0424 of Campylobacter fetus subsp. fetus (strain 82-40).